A 218-amino-acid chain; its full sequence is Small ribosomal subunit protein mS34 (218 aa).

A disordered region spans residues 180–218 (KNGDTSTEEPMLNVQRIRMEPWDYPAKQEDKGRAKGTPV). Residues 196–212 (IRMEPWDYPAKQEDKGR) are compositionally biased toward basic and acidic residues.

It belongs to the mitochondrion-specific ribosomal protein mS34 family. In terms of assembly, component of the mitochondrial small ribosomal subunit (mt-SSU). Mature mammalian 55S mitochondrial ribosomes consist of a small (28S) and a large (39S) subunit. The 28S small subunit contains a 12S ribosomal RNA (12S mt-rRNA) and 30 different proteins. The 39S large subunit contains a 16S rRNA (16S mt-rRNA), a copy of mitochondrial valine transfer RNA (mt-tRNA(Val)), which plays an integral structural role, and 52 different proteins.

The protein localises to the mitochondrion. Required for mitochondrial translation, plays a role in maintaining the stability of the small ribosomal subunit and the 12S rRNA that are required for mitoribosome formation. The polypeptide is Small ribosomal subunit protein mS34 (MRPS34) (Homo sapiens (Human)).